A 369-amino-acid chain; its full sequence is RNA pseudouridine synthase 5 (369 aa).

The S4 RNA-binding domain maps to 47–104 (APLLGWIQRIQNGQIQIDGEVVKDPNTLLRSGSKLVYSRLPWKEPDTPYSLEVLYEDD).

The protein belongs to the pseudouridine synthase RluA family.

The enzyme catalyses a uridine in RNA = a pseudouridine in RNA. This Arabidopsis thaliana (Mouse-ear cress) protein is RNA pseudouridine synthase 5.